Here is a 450-residue protein sequence, read N- to C-terminus: Chromosomal replication initiator protein DnaA (450 aa).

The tract at residues 1-84 (MENIHDLWDR…AVKFIIPPNQ (84 aa)) is domain I, interacts with DnaA modulators. A domain II region spans residues 84–111 (QDDEELEFQSSKKKQRKPYEETNDFPQS). Positions 89–108 (LEFQSSKKKQRKPYEETNDF) are disordered. Residues 112-328 (MLNPKYTFDT…GALIRVVAYS (217 aa)) form a domain III, AAA+ region region. ATP is bound by residues Gly-156, Gly-158, Lys-159, and Thr-160. The interval 329–450 (SLINKEITAD…QEIQEKLKQL (122 aa)) is domain IV, binds dsDNA.

Belongs to the DnaA family. As to quaternary structure, oligomerizes as a right-handed, spiral filament on DNA at oriC.

It localises to the cytoplasm. Its function is as follows. Plays an essential role in the initiation and regulation of chromosomal replication. ATP-DnaA binds to the origin of replication (oriC) to initiate formation of the DNA replication initiation complex once per cell cycle. Binds the DnaA box (a 9 base pair repeat at the origin) and separates the double-stranded (ds)DNA. Forms a right-handed helical filament on oriC DNA; dsDNA binds to the exterior of the filament while single-stranded (ss)DNA is stabiized in the filament's interior. The ATP-DnaA-oriC complex binds and stabilizes one strand of the AT-rich DNA unwinding element (DUE), permitting loading of DNA polymerase. After initiation quickly degrades to an ADP-DnaA complex that is not apt for DNA replication. Binds acidic phospholipids. The polypeptide is Chromosomal replication initiator protein DnaA (Geobacillus kaustophilus (strain HTA426)).